The primary structure comprises 203 residues: Endoplasmic reticulum transmembrane protein 3 (203 aa).

The Lumenal portion of the chain corresponds to methionine 1–threonine 6. Residues leucine 7–proline 27 traverse the membrane as a helical segment. The Cytoplasmic portion of the chain corresponds to serine 28–serine 45. A helical transmembrane segment spans residues threonine 46–isoleucine 66. Over asparagine 67–threonine 110 the chain is Lumenal. The helical transmembrane segment at glycine 111–leucine 131 threads the bilayer. Residues threonine 132 to asparagine 203 lie on the Cytoplasmic side of the membrane. Positions proline 142–aspartate 171 are disordered.

The protein belongs to the BCAP29/BCAP31 family.

Its subcellular location is the endoplasmic reticulum membrane. Its function is as follows. May play a role in anterograde transport of membrane proteins from the endoplasmic reticulum to the Golgi. May be involved in invertase secretion. The protein is Endoplasmic reticulum transmembrane protein 3 (YET3) of Saccharomyces cerevisiae (strain ATCC 204508 / S288c) (Baker's yeast).